We begin with the raw amino-acid sequence, 562 residues long: MDKRHDPSRRIIAPTGTELSCKSWLTEAPLRMLMNNLHPDVAERPEDLVVYGGIGRAARDWECYDKIVEVLQRLEEDETLLVQSGKPVGVFKTHNNAPRVIIANSNLVPHWANWEHFNELDKKGLAMYGQMTAGSWIYIGSQGIVQGTYETFVAMAKQHFNGSSAGKWILTGGLGGMGGAQPLAGTMAGYSVLTCEVDETRIDFRLRTKYVDKKATTLDEALAMIDEANKSGKPVSVGLLANAADVFAELVERGITPDVVTDQTSAHDPLNGYLPQGWTLEQAIEMRKTDEAAVVKAAKQSMAVQVKAMLALQAAGAATTDYGNNIRQMAFEEGVENAFDFPGFVPAYVRPLFCEGIGPFRWVALSGDPEDIYKTDAKVKELIPDNPHLHNWLDMARERIAFQGLPSRICWVGLKDRARLALAFNEMVKNGELSAPVVIGRDHLDSGSVASPNRETESMLDGSDAVSDWPLMNALLNTASGATWVSLHHGGGVGMGFSQHSGVVIVADGTDDAAARLGRVLWNDPATGVMRHADAGYDIAKNCAKEQGLDLPMLEKATTEGK.

NAD(+) is bound by residues 52–53, Gln-130, 176–178, Glu-196, Arg-201, 242–243, 263–267, 273–274, and Tyr-322; these read GG, GMG, NA, QTSAH, and YL. The active site involves Cys-410. Gly-492 provides a ligand contact to NAD(+).

The protein belongs to the urocanase family. NAD(+) serves as cofactor.

It localises to the cytoplasm. It catalyses the reaction 4-imidazolone-5-propanoate = trans-urocanate + H2O. Its pathway is amino-acid degradation; L-histidine degradation into L-glutamate; N-formimidoyl-L-glutamate from L-histidine: step 2/3. In terms of biological role, catalyzes the conversion of urocanate to 4-imidazolone-5-propionate. The protein is Urocanate hydratase of Shewanella pealeana (strain ATCC 700345 / ANG-SQ1).